A 65-amino-acid chain; its full sequence is Hirudin-2 (65 aa).

The interaction with thrombin active site stretch occupies residues 1-3 (ITY). 3 disulfide bridges follow: C6–C14, C16–C28, and C22–C39. The segment at 39–65 (CVTGEGTPKPQSHNDGDFEEIPEEYLQ) is disordered. Residue T45 is glycosylated (O-linked (GalNAc...) threonine). Residues 55 to 65 (DFEEIPEEYLQ) form an interaction with fibrinogen-binding exosite of thrombin region. A compositionally biased stretch (acidic residues) spans 55–65 (DFEEIPEEYLQ). At Y63 the chain carries Sulfotyrosine.

This sequence belongs to the protease inhibitor I14 (hirudin) family.

The protein localises to the secreted. In terms of biological role, hirudin is a potent thrombin-specific protease inhibitor. It forms a stable non-covalent complex with alpha-thrombin, thereby abolishing its ability to cleave fibrinogen. This chain is Hirudin-2, found in Hirudo medicinalis (Medicinal leech).